Consider the following 122-residue polypeptide: Large ribosomal subunit protein uL14 (122 aa).

This sequence belongs to the universal ribosomal protein uL14 family. As to quaternary structure, part of the 50S ribosomal subunit. Forms a cluster with proteins L3 and L19. In the 70S ribosome, L14 and L19 interact and together make contacts with the 16S rRNA in bridges B5 and B8.

In terms of biological role, binds to 23S rRNA. Forms part of two intersubunit bridges in the 70S ribosome. This chain is Large ribosomal subunit protein uL14, found in Treponema denticola (strain ATCC 35405 / DSM 14222 / CIP 103919 / JCM 8153 / KCTC 15104).